Consider the following 236-residue polypeptide: Biosynthetic peptidoglycan transglycosylase (236 aa).

Residues 20 to 40 traverse the membrane as a helical segment; the sequence is LVFIVLSVLILPYALIGLYLL.

The protein belongs to the glycosyltransferase 51 family.

Its subcellular location is the cell inner membrane. It carries out the reaction [GlcNAc-(1-&gt;4)-Mur2Ac(oyl-L-Ala-gamma-D-Glu-L-Lys-D-Ala-D-Ala)](n)-di-trans,octa-cis-undecaprenyl diphosphate + beta-D-GlcNAc-(1-&gt;4)-Mur2Ac(oyl-L-Ala-gamma-D-Glu-L-Lys-D-Ala-D-Ala)-di-trans,octa-cis-undecaprenyl diphosphate = [GlcNAc-(1-&gt;4)-Mur2Ac(oyl-L-Ala-gamma-D-Glu-L-Lys-D-Ala-D-Ala)](n+1)-di-trans,octa-cis-undecaprenyl diphosphate + di-trans,octa-cis-undecaprenyl diphosphate + H(+). Its pathway is cell wall biogenesis; peptidoglycan biosynthesis. Peptidoglycan polymerase that catalyzes glycan chain elongation from lipid-linked precursors. This is Biosynthetic peptidoglycan transglycosylase from Rhizobium meliloti (strain 1021) (Ensifer meliloti).